We begin with the raw amino-acid sequence, 167 residues long: Putative C-type lectin protein FPV008/FPV253 (167 aa).

One can recognise a C-type lectin domain in the interval 49–152 (CPDEWIGYNS…SCIFHERTIC (104 aa)). Intrachain disulfides connect Cys77-Cys152 and Cys131-Cys144.

This is Putative C-type lectin protein FPV008/FPV253 from Vertebrata (FPV).